We begin with the raw amino-acid sequence, 938 residues long: Bifunctional uridylyltransferase/uridylyl-removing enzyme (938 aa).

The segment at 1–379 is uridylyltransferase; that stretch reads MPPRLRPTHL…PGRAQKRKPL (379 aa). The interval 380 to 733 is uridylyl-removing; that stretch reads DEPGFHEVGG…GRIRSELNAA (354 aa). Positions 495-617 constitute an HD domain; that stretch reads VDEHTLRAVG…VQSPERLRLL (123 aa). ACT domains lie at 734 to 813 and 845 to 924; these read EVVV…PVAR and VVEA…TAQA.

It belongs to the GlnD family. The cofactor is Mg(2+).

It carries out the reaction [protein-PII]-L-tyrosine + UTP = [protein-PII]-uridylyl-L-tyrosine + diphosphate. It catalyses the reaction [protein-PII]-uridylyl-L-tyrosine + H2O = [protein-PII]-L-tyrosine + UMP + H(+). Its activity is regulated as follows. Uridylyltransferase (UTase) activity is inhibited by glutamine, while glutamine activates uridylyl-removing (UR) activity. In terms of biological role, modifies, by uridylylation and deuridylylation, the PII regulatory proteins (GlnB and homologs), in response to the nitrogen status of the cell that GlnD senses through the glutamine level. Under low glutamine levels, catalyzes the conversion of the PII proteins and UTP to PII-UMP and PPi, while under higher glutamine levels, GlnD hydrolyzes PII-UMP to PII and UMP (deuridylylation). Thus, controls uridylylation state and activity of the PII proteins, and plays an important role in the regulation of nitrogen assimilation and metabolism. The polypeptide is Bifunctional uridylyltransferase/uridylyl-removing enzyme (Phenylobacterium zucineum (strain HLK1)).